The following is a 447-amino-acid chain: Argininosuccinate synthase (447 aa).

ATP contacts are provided by residues 17–25 (AFSGGLDTS) and Ala-43. Tyr-99 lines the L-citrulline pocket. ATP contacts are provided by Gly-129 and Thr-131. 3 residues coordinate L-aspartate: Thr-131, Asn-135, and Asp-136. L-citrulline is bound at residue Asn-135. ATP is bound at residue Asp-136. Positions 139 and 192 each coordinate L-citrulline. Asp-194 contacts ATP. Residues Thr-201, Glu-203, and Glu-280 each coordinate L-citrulline.

The protein belongs to the argininosuccinate synthase family. Type 2 subfamily. Homotetramer.

It is found in the cytoplasm. The enzyme catalyses L-citrulline + L-aspartate + ATP = 2-(N(omega)-L-arginino)succinate + AMP + diphosphate + H(+). It participates in amino-acid biosynthesis; L-arginine biosynthesis; L-arginine from L-ornithine and carbamoyl phosphate: step 2/3. In Escherichia fergusonii (strain ATCC 35469 / DSM 13698 / CCUG 18766 / IAM 14443 / JCM 21226 / LMG 7866 / NBRC 102419 / NCTC 12128 / CDC 0568-73), this protein is Argininosuccinate synthase.